The following is a 611-amino-acid chain: Endo-1,4-beta-xylanase A (611 aa).

Positions Met1–Ala26 are cleaved as a signal peptide. A CBM2 domain is found at Gln27 to Ser128. 3 cysteine pairs are disulfide-bonded: Cys31/Cys125, Cys184/Cys215, and Cys194/Cys209. The 30-residue stretch at Gln183–Arg212 folds into the CBM10 domain. Positions Ser281–Ala607 constitute a GH10 domain. The Proton donor role is filled by Glu391. The active-site Nucleophile is Glu510.

Belongs to the glycosyl hydrolase 10 (cellulase F) family.

The catalysed reaction is Endohydrolysis of (1-&gt;4)-beta-D-xylosidic linkages in xylans.. Its pathway is glycan degradation; xylan degradation. The sequence is that of Endo-1,4-beta-xylanase A (xynA) from Cellvibrio japonicus (strain Ueda107) (Pseudomonas fluorescens subsp. cellulosa).